We begin with the raw amino-acid sequence, 185 residues long: ATP synthase subunit delta (185 aa).

It belongs to the ATPase delta chain family. In terms of assembly, F-type ATPases have 2 components, F(1) - the catalytic core - and F(0) - the membrane proton channel. F(1) has five subunits: alpha(3), beta(3), gamma(1), delta(1), epsilon(1). CF(0) has four main subunits: a(1), b(1), b'(1) and c(10-14). The alpha and beta chains form an alternating ring which encloses part of the gamma chain. F(1) is attached to F(0) by a central stalk formed by the gamma and epsilon chains, while a peripheral stalk is formed by the delta, b and b' chains.

The protein localises to the cellular thylakoid membrane. In terms of biological role, f(1)F(0) ATP synthase produces ATP from ADP in the presence of a proton or sodium gradient. F-type ATPases consist of two structural domains, F(1) containing the extramembraneous catalytic core and F(0) containing the membrane proton channel, linked together by a central stalk and a peripheral stalk. During catalysis, ATP synthesis in the catalytic domain of F(1) is coupled via a rotary mechanism of the central stalk subunits to proton translocation. Its function is as follows. This protein is part of the stalk that links CF(0) to CF(1). It either transmits conformational changes from CF(0) to CF(1) or is implicated in proton conduction. The polypeptide is ATP synthase subunit delta (Picosynechococcus sp. (strain ATCC 27264 / PCC 7002 / PR-6) (Agmenellum quadruplicatum)).